Here is a 554-residue protein sequence, read N- to C-terminus: Asparagine synthetase B [glutamine-hydrolyzing] (554 aa).

Cys2 serves as the catalytic For GATase activity. Residues 2-186 (CSIFGVFDIK…AGSYLWSQDG (185 aa)) enclose the Glutamine amidotransferase type-2 domain. L-glutamine contacts are provided by residues 50-54 (RLSIV), 75-77 (NGE), and Asp99. Residues Leu233, Val273, and 347–348 (SG) each bind ATP.

Belongs to the asparagine synthetase family. As to quaternary structure, homodimer.

It carries out the reaction L-aspartate + L-glutamine + ATP + H2O = L-asparagine + L-glutamate + AMP + diphosphate + H(+). Its pathway is amino-acid biosynthesis; L-asparagine biosynthesis; L-asparagine from L-aspartate (L-Gln route): step 1/1. Its activity is regulated as follows. Glutamine-dependent asparagine synthesis activity can be inhibited by aspartic acid analogs (such as a sulfinate derivative and (2S,3R)-2-amino-3-methylsuccinate) in vitro; the inhibition is competitive with respect to aspartate. Catalyzes the ATP-dependent conversion of aspartate into asparagine, using glutamine as a source of nitrogen. Can also use ammonia as the nitrogen source in vitro, albeit with lower efficiency. As nucleotide substrates, ATP and dATP are utilized at a similar rate in both the glutamine- and ammonia-dependent reactions, whereas GTP utilization is only 15% that of ATP, and CTP, UTP, ITP and XTP are very poor or not substrates. Also exhibits glutaminase activity. The chain is Asparagine synthetase B [glutamine-hydrolyzing] (asnB) from Escherichia coli (strain K12).